The primary structure comprises 554 residues: Hydroxylamine reductase (554 aa).

[2Fe-2S] cluster contacts are provided by Cys-3, Cys-6, Cys-18, and Cys-25. Hybrid [4Fe-2O-2S] cluster contacts are provided by His-252, Glu-276, Cys-320, Cys-408, Cys-436, Cys-461, Glu-495, and Lys-497. Cysteine persulfide is present on Cys-408.

It belongs to the HCP family. The cofactor is [2Fe-2S] cluster. It depends on hybrid [4Fe-2O-2S] cluster as a cofactor.

The protein resides in the cytoplasm. The enzyme catalyses A + NH4(+) + H2O = hydroxylamine + AH2 + H(+). In terms of biological role, catalyzes the reduction of hydroxylamine to form NH(3) and H(2)O. The polypeptide is Hydroxylamine reductase (Shewanella sp. (strain MR-7)).